Reading from the N-terminus, the 245-residue chain is 1-(5-phosphoribosyl)-5-[(5-phosphoribosylamino)methylideneamino] imidazole-4-carboxamide isomerase (245 aa).

D7 serves as the catalytic Proton acceptor. D129 (proton donor) is an active-site residue.

Belongs to the HisA/HisF family.

It is found in the cytoplasm. The enzyme catalyses 1-(5-phospho-beta-D-ribosyl)-5-[(5-phospho-beta-D-ribosylamino)methylideneamino]imidazole-4-carboxamide = 5-[(5-phospho-1-deoxy-D-ribulos-1-ylimino)methylamino]-1-(5-phospho-beta-D-ribosyl)imidazole-4-carboxamide. It functions in the pathway amino-acid biosynthesis; L-histidine biosynthesis; L-histidine from 5-phospho-alpha-D-ribose 1-diphosphate: step 4/9. This Salmonella enteritidis PT4 (strain P125109) protein is 1-(5-phosphoribosyl)-5-[(5-phosphoribosylamino)methylideneamino] imidazole-4-carboxamide isomerase.